We begin with the raw amino-acid sequence, 784 residues long: Toll-like receptor 2 (784 aa).

Positions 1-24 are cleaved as a signal peptide; it reads MLRALWLFWILVAITVLFSKRCSA. Residues 25–587 are Extracellular-facing; that stretch reads QESLSCDASG…ARPSVLECHQ (563 aa). Cysteines 30 and 36 form a disulfide. 19 LRR repeats span residues 54–77, 78–101, 102–125, 126–150, 151–175, 176–199, 200–223, 224–250, 251–278, 279–308, 309–337, 338–361, 362–388, 389–414, 415–437, 438–457, 458–478, 479–500, and 501–524; these read MKSLDLSFNKITYIGHGDLRACAN, LQVLILKSSRINTIEGDAFYSLGS, LEHLDLSDNHLSSLSSSWFGPLSS, LKYLNLMGNPYQTLGVTSLFPNLTN, LQTLRIGNVETFSEIRRIDFAGLTS, LNELEIKALSLRNYQSQSLKSIRD, IHHLTLHLSESAFLLEIFADILSS, VRYLELRDTNLARFQFSPLPVDEVSSP, MKKLAFRGSVLTDESFNELLKLLRYILE, LSEVEFDDCTLNGLGDFNPSESDVVSELGK, VETVTIRRLHIPQFYLFYDLSTVYSLLEK, VKRITVENSKVFLVPCSFSQHLKS, LEFLDLSENLMVEEYLKNSACKGAWPS, LQTLVLSQNHLRSMQKTGEILLTLKN, LTSLDISRNTFHPMPDSCQWPEK, MRFLNLSSTGIRVVKTCIPQ, TLEVLDVSNNNLDSFSLFLPR, LQELYISRNKLKTLPDASLFPV, and LLVMKIRENAVSTFSKDQLGSFPK. The N-linked (GlcNAc...) asparagine glycan is linked to Asn-147. Residues Cys-353 and Cys-382 are joined by a disulfide bond. Asn-414 is a glycosylation site (N-linked (GlcNAc...) asparagine). Cys-432 and Cys-454 are disulfide-bonded. Asn-442 carries N-linked (GlcNAc...) asparagine glycosylation. The 52-residue stretch at 525-576 folds into the LRRCT domain; sequence LETLEAGDNHFVCSCELLSFTMETPALAQILVDWPDSYLCDSPPRLHGHRLQ. A helical transmembrane segment spans residues 588–608; that stretch reads AALVSGVCCALLLLILLVGAL. At 609 to 784 the chain is on the cytoplasmic side; that stretch reads CHHFHGLWYL…WVNLRTAIKS (176 aa). A TIR domain is found at 639–782; that stretch reads VCYDAFVSYS…VFWVNLRTAI (144 aa). Residue Lys-754 forms a Glycyl lysine isopeptide (Lys-Gly) (interchain with G-Cter in ubiquitin) linkage. An ATG16L1-binding motif motif is present at residues 761–778; the sequence is YLEWPLDEGQQEVFWVNL.

Belongs to the Toll-like receptor family. As to quaternary structure, interacts with LY96, TLR1 and TLR6 (via extracellular domain). TLR2 seems to exist in heterodimers with either TLR1 or TLR6 before stimulation by the ligand. The heterodimers form bigger oligomers in response to their corresponding ligands as well as further heterotypic associations with other receptors such as CD14 and/or CD36. Binds MYD88 (via TIR domain). Interacts with TICAM1. Interacts with CNPY3. Interacts with ATG16L1. Interacts with non-modified M.tuberculosis protein MPT83. Interacts with PPP1R11. Interacts with TIRAP. In terms of assembly, (Microbial infection) Interacts with Staphylococcus aureus protein SSL3; this interaction inhibits TLR2-mediated cytokine production. (Microbial infection) Interacts with Toxoplasma gondii micronemal protein 1 (MIC1); the interaction promotes activation of bone marrow-derived dendritic cells and macrophages. Interacts with Toxoplasma gondii micronemal protein 4 (MIC4); the interaction promotes activation of bone marrow-derived dendritic cells and macrophages. In terms of processing, ubiquitinated at Lys-754 by PPP1R11, leading to its degradation. Deubiquitinated by USP2. Post-translationally, glycosylation of Asn-442 is critical for secretion of the N-terminal ectodomain of TLR2. As to expression, detected in a macrophage cell line, smooth muscle, lung, spleen, thymus, brain and adipose tissue. Cell surface expression detected in lung alveolar macrophages, dendritic macrophages and at lower levels in lung macrophages (at protein level).

The protein localises to the cell membrane. The protein resides in the cytoplasmic vesicle. It is found in the phagosome membrane. It localises to the membrane raft. Cooperates with LY96 to mediate the innate immune response to bacterial lipoproteins and other microbial cell wall components. Cooperates with TLR1 or TLR6 to mediate the innate immune response to bacterial lipoproteins or lipopeptides. Acts via MYD88 and TRAF6, leading to NF-kappa-B activation, cytokine secretion and the inflammatory response. May also promote apoptosis in response to lipoproteins. Forms activation clusters composed of several receptors depending on the ligand, these clusters trigger signaling from the cell surface and subsequently are targeted to the Golgi in a lipid-raft dependent pathway. Forms the cluster TLR2:TLR6:CD14:CD36 in response to diacylated lipopeptides and TLR2:TLR1:CD14 in response to triacylated lipopeptides. Recognizes M.tuberculosis major T-antigen EsxA (ESAT-6) which inhibits downstream MYD88-dependent signaling. Acts as the major receptor for M.tuberculosis lipoproteins LprA, LprG, LpqH and PhoS1 (pstS1), in conjunction with TLR1 and for some but not all lipoproteins CD14 and/or CD36. The lipoproteins act as agonists to modulate antigen presenting cell functions in response to the pathogen. Recombinant MPT83 from M.tuberculosis stimulates secretion of cytokines (TNF-alpha, IL-6 and IL-12p40) by mouse macrophage cell lines in a TLR2-dependent fashion, which leads to increased host innate immunity responses against the bacterium. Lung macrophages which express low levels of TLR2 respond poorly to stimulation by M.tuberculosis LpqH. Required for normal uptake of M.tuberculosis, a process that is inhibited by M.tuberculosis LppM. Interacts with TICAM2. Its function is as follows. (Microbial infection) Mediates activation of bone marrow-derived dendritic cells and macrophages, and production of pro-inflammatory cytokines, such as IL12 (IL12B/IL12A), triggered by Toxoplasma gondii micronemal protein 4 (MIC4) and micronemal protein 1 (MIC1). The polypeptide is Toll-like receptor 2 (Tlr2) (Mus musculus (Mouse)).